The primary structure comprises 364 residues: Tyrosine--tRNA ligase (364 aa).

Tyr41, Tyr167, Gln171, Asp174, and Gln189 together coordinate L-tyrosine. The 'KMSKS' region motif lies at 238–242; sequence KMSKS. Lys241 serves as a coordination point for ATP.

This sequence belongs to the class-I aminoacyl-tRNA synthetase family. TyrS type 4 subfamily. Homodimer.

It localises to the cytoplasm. It catalyses the reaction tRNA(Tyr) + L-tyrosine + ATP = L-tyrosyl-tRNA(Tyr) + AMP + diphosphate + H(+). Its function is as follows. Catalyzes the attachment of tyrosine to tRNA(Tyr) in a two-step reaction: tyrosine is first activated by ATP to form Tyr-AMP and then transferred to the acceptor end of tRNA(Tyr). In Sulfurisphaera tokodaii (strain DSM 16993 / JCM 10545 / NBRC 100140 / 7) (Sulfolobus tokodaii), this protein is Tyrosine--tRNA ligase.